A 547-amino-acid chain; its full sequence is bZIP transcription factor 29 (547 aa).

Disordered stretches follow at residues 1 to 199, 244 to 312, and 333 to 356; these read MGDT…SGGE, NSSE…DIAP, and GDES…TNSV. Residues 15–52 are compositionally biased toward polar residues; sequence LHSSFGTTSSSIPKNPISQLDLNPNFIRSSAPQFSKPF. Over residues 63–73 the composition is skewed to pro residues; that stretch reads PSHPNLIPPTS. A compositionally biased stretch (polar residues) spans 74-89; that stretch reads PFSQIPTTRQPGSHNF. Residues 120–132 are compositionally biased toward basic and acidic residues; sequence FRDHDVSMEDRDS. Residues 134 to 157 are compositionally biased toward polar residues; it reads VFNSNHSLPPSPFTRCNSTSSSSL. Residues 249-263 show a composition bias toward basic and acidic residues; it reads DDSKNGNENRDDMES. Polar residues predominate over residues 264-275; sequence SRASGTKTNGSD. The span at 279–294 shows a compositional bias: low complexity; that stretch reads ESSSVNESANNNMNSS. Residues 344-356 show a composition bias toward polar residues; that stretch reads GSMSRKVSPTNSV. A bZIP domain is found at 394–457; the sequence is DPKRVKRILA…MGLTNQNNEL (64 aa). The segment at 396-417 is basic motif; sequence KRVKRILANRQSAARSKERKMR. The stretch at 416–469 forms a coiled coil; sequence MRYIVELEHKVQTLQTEATTLSAQLTLLQRDMMGLTNQNNELKFRLQAMEQQAR. The tract at residues 422–457 is leucine-zipper; that stretch reads LEHKVQTLQTEATTLSAQLTLLQRDMMGLTNQNNEL. Low complexity predominate over residues 517–535; the sequence is QLRQQPQQMQQQSHQQNHQ. Positions 517–547 are disordered; sequence QLRQQPQQMQQQSHQQNHQNGTMATKSESNE. Polar residues predominate over residues 536-547; sequence NGTMATKSESNE.

Forms homodimers. In terms of tissue distribution, expressed in roots, leaves and flowers. Expressed in the root tips, lateral root primordia, and guard cells of leaves, hypocotyls and anthers.

The protein localises to the cytoplasm. The protein resides in the nucleus. In terms of biological role, transcription factor that acts as a repressor of reproductive development, meristem size and plant growth. Regulates meristem size, cell size and cell number during plant development. Binds to the promoters of the cell cycle regulators CYCB1-2 and SMR4, and genes involved in cell wall organization, such as XTH9, EXPA1 and EXPA3. Possesses transactivation activity in yeast. Possesses transactivation activity in plant protoplasts. Plays a role in abiotic stress response by binding to the 5'-CAGCTG-3' DNA sequence found in the promoters of MYB44 and TRX8. Plays a role in osmosensory response by binding to the 5'-AGCTGT/G-3' DNA sequence found in the promoters of the hypoosmolarity-responsive genes CYP707A1 and CYP707A3. Binds to the 5'-AGCTGT-3' DNA sequence found in the promoter of the ZAT1 gene in response to abiotic stresses, such as oxidative stress, high-light, osmotic shock, salt and heat stresses. This Arabidopsis thaliana (Mouse-ear cress) protein is bZIP transcription factor 29.